Reading from the N-terminus, the 595-residue chain is Elongation factor 4 (595 aa).

One can recognise a tr-type G domain in the interval 2–183; the sequence is KNIRNFCIIA…AIVEQVPAPA (182 aa). Residues 14–19 and 130–133 contribute to the GTP site; these read DHGKST and NKVD.

The protein belongs to the TRAFAC class translation factor GTPase superfamily. Classic translation factor GTPase family. LepA subfamily.

It is found in the cell inner membrane. It carries out the reaction GTP + H2O = GDP + phosphate + H(+). Required for accurate and efficient protein synthesis under certain stress conditions. May act as a fidelity factor of the translation reaction, by catalyzing a one-codon backward translocation of tRNAs on improperly translocated ribosomes. Back-translocation proceeds from a post-translocation (POST) complex to a pre-translocation (PRE) complex, thus giving elongation factor G a second chance to translocate the tRNAs correctly. Binds to ribosomes in a GTP-dependent manner. The sequence is that of Elongation factor 4 from Porphyromonas gingivalis (strain ATCC 33277 / DSM 20709 / CIP 103683 / JCM 12257 / NCTC 11834 / 2561).